The sequence spans 726 residues: Probable dipeptidyl-peptidase 5 (726 aa).

An N-terminal signal peptide occupies residues 1 to 19 (MAAAKWLIASLAFASSGLA). N-linked (GlcNAc...) asparagine glycosylation is found at Asn-96 and Asn-252. Residues 269-291 (AEPINKRNGPRTPQGIEGASSSP) are disordered. A glycan (N-linked (GlcNAc...) asparagine) is linked at Asn-485. Ser-558 acts as the Charge relay system in catalysis. Asn-605 carries an N-linked (GlcNAc...) asparagine glycan. Active-site charge relay system residues include Asp-641 and His-673. The N-linked (GlcNAc...) asparagine glycan is linked to Asn-699.

It belongs to the peptidase S9C family.

It localises to the secreted. Extracellular dipeptidyl-peptidase which removes N-terminal dipeptides sequentially from polypeptides having unsubstituted N-termini. Contributes to pathogenicity. The sequence is that of Probable dipeptidyl-peptidase 5 (DPP5) from Arthroderma benhamiae (strain ATCC MYA-4681 / CBS 112371) (Trichophyton mentagrophytes).